The following is a 520-amino-acid chain: Cytochrome P450 monooxygenase 98 (520 aa).

A helical membrane pass occupies residues 7–27 (MLNNNLLIVIGTFAVCVYIVL). Cys445 provides a ligand contact to heme.

Belongs to the cytochrome P450 family. Heme serves as cofactor.

The protein resides in the membrane. The protein operates within secondary metabolite biosynthesis. Its function is as follows. Cytochrome P450 monooxygenase that is able to use pyrene, phenanthrene, 3,5-dimethoxy-trans-stilbene and 3,5,4'-trimethoxy-trans-stilbene as substrates for oxidation. The chain is Cytochrome P450 monooxygenase 98 from Postia placenta (strain ATCC 44394 / Madison 698-R) (Brown rot fungus).